A 266-amino-acid polypeptide reads, in one-letter code: 4-hydroxy-tetrahydrodipicolinate reductase (266 aa).

An NAD(+)-binding site is contributed by 10–15; it reads GPRGRM. NADP(+) is bound at residue lysine 38. NAD(+) is bound by residues 99 to 101 and 125 to 128; these read GTT and APNF. Histidine 155 serves as the catalytic Proton donor/acceptor. Residue histidine 156 participates in (S)-2,3,4,5-tetrahydrodipicolinate binding. Lysine 159 (proton donor) is an active-site residue. 165 to 166 is a (S)-2,3,4,5-tetrahydrodipicolinate binding site; it reads GT.

This sequence belongs to the DapB family.

The protein resides in the cytoplasm. The enzyme catalyses (S)-2,3,4,5-tetrahydrodipicolinate + NAD(+) + H2O = (2S,4S)-4-hydroxy-2,3,4,5-tetrahydrodipicolinate + NADH + H(+). It catalyses the reaction (S)-2,3,4,5-tetrahydrodipicolinate + NADP(+) + H2O = (2S,4S)-4-hydroxy-2,3,4,5-tetrahydrodipicolinate + NADPH + H(+). The protein operates within amino-acid biosynthesis; L-lysine biosynthesis via DAP pathway; (S)-tetrahydrodipicolinate from L-aspartate: step 4/4. In terms of biological role, catalyzes the conversion of 4-hydroxy-tetrahydrodipicolinate (HTPA) to tetrahydrodipicolinate. The polypeptide is 4-hydroxy-tetrahydrodipicolinate reductase (Bacillus cereus (strain ZK / E33L)).